The sequence spans 258 residues: Phosphate import ATP-binding protein PstB (258 aa).

Residues 5-253 (LDLNDVNIYY…PTKKETEDYI (249 aa)) enclose the ABC transporter domain. Residue 37-44 (GPSGCGKS) participates in ATP binding.

Belongs to the ABC transporter superfamily. Phosphate importer (TC 3.A.1.7) family. The complex is composed of two ATP-binding proteins (PstB), two transmembrane proteins (PstC and PstA) and a solute-binding protein (PstS).

It is found in the cell membrane. The catalysed reaction is phosphate(out) + ATP + H2O = ADP + 2 phosphate(in) + H(+). Functionally, part of the ABC transporter complex PstSACB involved in phosphate import. Responsible for energy coupling to the transport system. This is Phosphate import ATP-binding protein PstB from Corynebacterium jeikeium (strain K411).